Here is a 158-residue protein sequence, read N- to C-terminus: Large ribosomal subunit protein uL16 (158 aa).

This sequence belongs to the universal ribosomal protein uL16 family. Part of the 50S ribosomal subunit.

Binds 23S rRNA and is also seen to make contacts with the A and possibly P site tRNAs. This is Large ribosomal subunit protein uL16 from Synechococcus sp. (strain CC9902).